Reading from the N-terminus, the 404-residue chain is Tryptophan synthase beta chain (404 aa).

At lysine 94 the chain carries N6-(pyridoxal phosphate)lysine.

The protein belongs to the TrpB family. In terms of assembly, tetramer of two alpha and two beta chains. It depends on pyridoxal 5'-phosphate as a cofactor.

The catalysed reaction is (1S,2R)-1-C-(indol-3-yl)glycerol 3-phosphate + L-serine = D-glyceraldehyde 3-phosphate + L-tryptophan + H2O. The protein operates within amino-acid biosynthesis; L-tryptophan biosynthesis; L-tryptophan from chorismate: step 5/5. Functionally, the beta subunit is responsible for the synthesis of L-tryptophan from indole and L-serine. The chain is Tryptophan synthase beta chain from Staphylococcus saprophyticus subsp. saprophyticus (strain ATCC 15305 / DSM 20229 / NCIMB 8711 / NCTC 7292 / S-41).